We begin with the raw amino-acid sequence, 456 residues long: Gamma-aminobutyric acid receptor subunit alpha-1 (456 aa).

Residues Met-1 to Gly-27 form the signal peptide. The Extracellular portion of the chain corresponds to Gln-28 to Phe-253. Asn-38 carries an N-linked (GlcNAc...) asparagine glycan. Arg-94 is a binding site for 4-aminobutanoate. The N-linked (GlcNAc...) asparagine glycan is linked to Asn-138. Thr-157 contributes to the 4-aminobutanoate binding site. Cysteines 166 and 180 form a disulfide. A helical transmembrane segment spans residues Val-254–Leu-274. Position 273 (Trp-273) interacts with 3alpha-hydroxy-5alpha-pregnan-11,20-dione. Residues Asn-275 to Val-279 are Cytoplasmic-facing. A helical membrane pass occupies residues Pro-280–Arg-301. Residues Asn-302–Thr-311 are Extracellular-facing. The chain crosses the membrane as a helical span at residues Ala-312–Thr-333. Residues Val-334 to Arg-421 are Cytoplasmic-facing. Residues Leu-422–Thr-441 form a helical membrane-spanning segment. At Tyr-442 to Gln-456 the chain is on the extracellular side.

Belongs to the ligand-gated ion channel (TC 1.A.9) family. Gamma-aminobutyric acid receptor (TC 1.A.9.5) subfamily. GABRA1 sub-subfamily. In terms of assembly, heteropentamer, formed by a combination of alpha (GABRA1-6), beta (GABRB1-3), gamma (GABRG1-3), delta (GABRD), epsilon (GABRE), rho (GABRR1-3), pi (GABRP) and theta (GABRQ) subunits, each subunit exhibiting distinct physiological and pharmacological properties. Interacts with UBQLN1. Interacts with TRAK1. Interacts with KIF21B. Identified in a complex of 720 kDa composed of LHFPL4, NLGN2, GABRA1, GABRB2, GABRG2 and GABRB3. Interacts with LHFPL4. Interacts with NLGN2. Interacts with SHISA7; interaction leads regulation of GABAAR trafficking, channel deactivation kinetics and pharmacology.

It localises to the postsynaptic cell membrane. The protein localises to the cell membrane. Its subcellular location is the cytoplasmic vesicle membrane. The enzyme catalyses chloride(in) = chloride(out). Its activity is regulated as follows. Allosterically activated by benzodiazepines and the anesthetic alphaxalone. Allosterically activated by pentobarbital. Inhibited by the antagonist bicuculline. Potentiated by histamine. In terms of biological role, alpha subunit of the heteropentameric ligand-gated chloride channel gated by Gamma-aminobutyric acid (GABA), a major inhibitory neurotransmitter in the brain. GABA-gated chloride channels, also named GABA(A) receptors (GABAAR), consist of five subunits arranged around a central pore and contain GABA active binding site(s) located at the alpha and beta subunit interface(s). When activated by GABA, GABAARs selectively allow the flow of chloride anions across the cell membrane down their electrochemical gradient. Alpha-1/GABRA1-containing GABAARs are largely synaptic. Chloride influx into the postsynaptic neuron following GABAAR opening decreases the neuron ability to generate a new action potential, thereby reducing nerve transmission. GABAARs containing alpha-1 and beta-2 or -3 subunits exhibit synaptogenic activity; the gamma-2 subunit being necessary but not sufficient to induce rapid synaptic contacts formation. GABAARs function also as histamine receptor where histamine binds at the interface of two neighboring beta subunits and potentiates GABA response. GABAARs containing alpha, beta and epsilon subunits also permit spontaneous chloride channel activity while preserving the structural information required for GABA-gated openings. Alpha-1-mediated plasticity in the orbitofrontal cortex regulates context-dependent action selection. Together with rho subunits, may also control neuronal and glial GABAergic transmission in the cerebellum. This chain is Gamma-aminobutyric acid receptor subunit alpha-1, found in Homo sapiens (Human).